Reading from the N-terminus, the 304-residue chain is Calcium release-activated calcium channel protein 1 (304 aa).

A compositionally biased stretch (pro residues) spans 1–11 (MHPEPAPPPNN). The disordered stretch occupies residues 1–49 (MHPEPAPPPNNSNPELPLSGGSSTSGSRRSRRRSGDGEPTGAPPLPPPP). Residues 1-88 (MHPEPAPPPN…KLYLSRAKLK (88 aa)) are Cytoplasmic-facing. Positions 3–49 (PEPAPPPNNSNPELPLSGGSSTSGSRRSRRRSGDGEPTGAPPLPPPP) are required for generation of inwardly rectifying CRAC currents. Positions 12-27 (SNPELPLSGGSSTSGS) are enriched in low complexity. Residues 39-60 (PTGAPPLPPPPAVSYPDWIGQS) are AKAP5 association region. The interval 71-91 (SMQALSWRKLYLSRAKLKASS) is interaction with STIM1. The chain crosses the membrane as a helical span at residues 89-106 (ASSRTSALLSGFAMVAMV). Topologically, residues 107 to 120 (EVQLDTDHDYPPGL) are extracellular. A helical transmembrane segment spans residues 121–141 (LIVFSACTTVLVAVHLFALMI). Residues 142-174 (STCILPNIEAVSNVHNLNSVKESPHERMHRHIE) are Cytoplasmic-facing. The chain crosses the membrane as a helical span at residues 175-195 (LAWAFSTVIGTLLFLAEVVLL). The Extracellular portion of the chain corresponds to 196–237 (CWVKFLPLKRQAGQPSPTKPPTEPAVVVANSSNNGGITPGEA). The N-linked (GlcNAc...) asparagine glycan is linked to N225. A helical transmembrane segment spans residues 238–258 (AAIASTAIMVPCGLVFIVFAV). Over 259-304 (HFYRSLVSHKTDRQFQELNELAEFARLQDQLDHRGDHSLTPGTHYA) the chain is Cytoplasmic. Residues 275–295 (ELNELAEFARLQDQLDHRGDH) form an interaction with STIM1 region. Residue T298 is modified to Phosphothreonine.

Belongs to the Orai family. In terms of assembly, oligomerizes in homomeric and heteromeric ORAI complexes. Native CRAC channels most likely consist of hexameric ORAI heteromers, implying that diverse ORAI1, ORAI2 and ORAI3 subunit combinations with distinct biophysical properties can operate in a cell-type specific way. ARC channels are heteropentamers consisting of three ORAI1 and two ORAI3 subunits. Interacts with STIM1 and STIM2; this regulates channel activity. Interacts with CALM; this may displace STIM1 and STIM2 and might thereby modulate channel activity. Interacts (via N-terminus) with AKAP5 upon store depletion. Interacts with CRACR2A/EFCAB4B; the interaction is direct and takes place in absence of Ca(2+). Forms a complex with CRACR2A/EFCAB4B and STIM1 at low concentration of Ca(2+), the complex dissociates at elevated Ca(2+) concentrations. Interacts with ASPH (isoform 8). Interacts with SLC35G1. Interacts with UBQLN1. Interacts with ADCY8; interaction is calcium store depletion independent; interaction occurs in membrane raft; interaction increases markedly after store depletion; positively regulates SOCE-induced adenylate cyclase activity; contributes to the targeting of ADCY8 to discrete regions of the plasma membrane that are shielded from other calcium events. Interacts with EFHB; the interaction takes place upon Ca(2+)-store depletion. Interacts (via N- and C-termini) with ATP2C2 (via N-terminus); this interaction regulates Ca(2+) influx at the plasma membrane. Interacts with TSPAN18; this interaction regulates ORAI1 exit from the endoplasmic (ER), and/or Golgi, and trafficking to the cell surface. N-glycosylated. N-glycosylation inhibits channel activity in T cells. Post-translationally, ubiquitinated. In terms of processing, cys-195 is oxidated, leading to inactivation of channel activity.

Its subcellular location is the cell membrane. The protein localises to the basolateral cell membrane. The enzyme catalyses Ca(2+)(in) = Ca(2+)(out). With respect to regulation, oxidation at Cys-196 leads to inactivation of channel activity. Its function is as follows. Pore-forming subunit of two major inward rectifying Ca(2+) channels at the plasma membrane: Ca(2+) release-activated Ca(2+) (CRAC) channels and arachidonate-regulated Ca(2+)-selective (ARC) channels. Assembles with ORAI2 and ORAI3 to form hexameric CRAC channels that mediate Ca(2+) influx upon depletion of endoplasmic reticulum Ca(2+) store and channel activation by Ca(2+) sensor STIM1, a process known as store-operated Ca(2+) entry (SOCE). Various pore subunit combinations may account for distinct CRAC channel spatiotemporal and cell-type specific dynamics. ORAI1 mainly contributes to the generation of Ca(2+) plateaus involved in sustained Ca(2+) entry and is dispensable for cytosolic Ca(2+) oscillations, whereas ORAI2 and ORAI3 generate oscillatory patterns. CRAC channels assemble in Ca(2+) signaling microdomains where Ca(2+) influx is coupled to calmodulin and calcineurin signaling and activation of NFAT transcription factors recruited to ORAI1 via AKAP5. Activates NFATC2/NFAT1 and NFATC3/NFAT4-mediated transcriptional responses. CRAC channels are the main pathway for Ca(2+) influx in T cells and promote the immune response to pathogens by activating NFAT-dependent cytokine and chemokine transcription. Assembles with ORAI3 to form channels that mediate store-independent Ca(2+) influx in response to inflammatory metabolites arachidonate or its derivative leukotriene C4, termed ARC and LRC channels respectively. Plays a prominent role in Ca(2+) influx at the basolateral membrane of mammary epithelial cells independently of the Ca(2+) content of endoplasmic reticulum or Golgi stores. May mediate transepithelial transport of large quantities of Ca(2+) for milk secretion. The polypeptide is Calcium release-activated calcium channel protein 1 (Orai1) (Rattus norvegicus (Rat)).